Consider the following 488-residue polypeptide: NADH-quinone oxidoreductase subunit N (488 aa).

The next 14 helical transmembrane spans lie at 15–35 (LALPEIWMLVMACVVLVVDLY), 42–62 (GMTFMLTQFTLVVAGVLAIVA), 79–99 (NLAAVLKVAIAGLGFLSFAYC), 108–128 (LLKGEYFVLGLFSLLGMMIMA), 133–153 (LMTVYLGLELLALTLYAMVAF), 168–188 (FVLGAIASGILLYGMSLIYGA), 209–229 (WLLLLGMTLVVVGVAFKFGAV), 243–263 (PTTVALFASTAPKVAAVALFV), 277–297 (WQPMIILLAVASLVVGNLAAL), 305–325 (MLAYSTASHVGFILLGFIAGT), 333–353 (LFYAITYGIMSAGAFGLIILL), 376–396 (MALMMLLLMFSMTGIPGTVGF), 409–429 (VGLVWLAVFAVVFAVIGAFYY), and 456–476 (GLLVANGIAVLLLGIFPDSLI).

It belongs to the complex I subunit 2 family. As to quaternary structure, NDH-1 is composed of 14 different subunits. Subunits NuoA, H, J, K, L, M, N constitute the membrane sector of the complex.

It localises to the cell inner membrane. The catalysed reaction is a quinone + NADH + 5 H(+)(in) = a quinol + NAD(+) + 4 H(+)(out). In terms of biological role, NDH-1 shuttles electrons from NADH, via FMN and iron-sulfur (Fe-S) centers, to quinones in the respiratory chain. The immediate electron acceptor for the enzyme in this species is believed to be ubiquinone. Couples the redox reaction to proton translocation (for every two electrons transferred, four hydrogen ions are translocated across the cytoplasmic membrane), and thus conserves the redox energy in a proton gradient. The protein is NADH-quinone oxidoreductase subunit N of Alkalilimnicola ehrlichii (strain ATCC BAA-1101 / DSM 17681 / MLHE-1).